A 416-amino-acid chain; its full sequence is Alpha-1-antiproteinase (416 aa).

The N-terminal stretch at 1–24 (MALSITRGLLLLAALCCLAPTSLA) is a signal peptide. 4 N-linked (GlcNAc...) asparagine glycosylation sites follow: N68, N105, N143, and N269. Positions 371 to 390 (GATFLEAIPMSLPPDVEFNR) are RCL. The residue at position 381 (S381) is a Phosphoserine.

It belongs to the serpin family. Interacts with CELA2A. Interacts with ERGIC3 and LMAN1/ERGIC53. Interacts with PRSS1/Trypsin. Plasma.

It localises to the secreted. In terms of biological role, inhibits human leukocyte elastase, pig pancreatic elastase and bovine trypsin on a 1:1 molar basis. This is Alpha-1-antiproteinase from Ovis aries (Sheep).